Reading from the N-terminus, the 188-residue chain is MSVLPTPLANQLLIALPALSDPTFSRSVALICQHDENGAMGVLVNRPSEYTLGEVLSQMGIDTVDEHLREQIVLSGGPVHPERGFVIHDDARDWDSSLEVGQGVYLTTSRDILEAMAAGEGPRNALVALGCAGWGAGQLEFELGENSWLTAPSDANVLFATALEDRWQTAAGRIGVDLFRLTDYSGHA.

It belongs to the UPF0301 (AlgH) family.

This Xanthomonas axonopodis pv. citri (strain 306) protein is UPF0301 protein XAC2918.